A 370-amino-acid polypeptide reads, in one-letter code: MHSESPIQRRPSRKIWVGPVAVGGDAPISVQSMTNTDTHDVEATVAQIRRLEAAGADIVRVSVPDMDAAEAFGRIKQQVQLPLVADIHFDYQIALRVAELGVDCLRINPGNIGREDRVRAVVDAARDRGIPIRIGVNAGSLEKDLQKKYGEPTPQALVESALRHVEHLDRLDFQNFKVSVKASDVFMAVAAYRLLAGQIEQPLHLGITEAGGLRSGTVKSAVGLGMLLAEGIGDTIRVSLAADPVEEIKVGFDILKSLHLRSRGINFIACPSCSRQNFDVVKTMNELETRLEDLLVPLDVAVIGCVVNGPGEAKEAHVGLTGGTPNNLVYIDGKPAQKLGNENLVDELERLIRRKAAEKAAADASLIVRS.

Positions 270, 273, 305, and 312 each coordinate [4Fe-4S] cluster.

This sequence belongs to the IspG family. It depends on [4Fe-4S] cluster as a cofactor.

It carries out the reaction (2E)-4-hydroxy-3-methylbut-2-enyl diphosphate + oxidized [flavodoxin] + H2O + 2 H(+) = 2-C-methyl-D-erythritol 2,4-cyclic diphosphate + reduced [flavodoxin]. Its pathway is isoprenoid biosynthesis; isopentenyl diphosphate biosynthesis via DXP pathway; isopentenyl diphosphate from 1-deoxy-D-xylulose 5-phosphate: step 5/6. Functionally, converts 2C-methyl-D-erythritol 2,4-cyclodiphosphate (ME-2,4cPP) into 1-hydroxy-2-methyl-2-(E)-butenyl 4-diphosphate. The sequence is that of 4-hydroxy-3-methylbut-2-en-1-yl diphosphate synthase (flavodoxin) from Azotobacter vinelandii (strain DJ / ATCC BAA-1303).